Here is a 163-residue protein sequence, read N- to C-terminus: Nucleotide-binding protein YajQ (163 aa).

The protein belongs to the YajQ family.

In terms of biological role, nucleotide-binding protein. The protein is Nucleotide-binding protein YajQ of Salmonella heidelberg (strain SL476).